We begin with the raw amino-acid sequence, 33 residues long: Photosystem II reaction center protein Psb30 (33 aa).

Residues 5 to 25 traverse the membrane as a helical segment; the sequence is LALTLVSLVLVVSAGPLVVVL.

The protein belongs to the Psb30/Ycf12 family. As to quaternary structure, PSII is composed of 1 copy each of membrane proteins PsbA, PsbB, PsbC, PsbD, PsbE, PsbF, PsbH, PsbI, PsbJ, PsbK, PsbL, PsbM, PsbT, PsbX, PsbY, PsbZ, Psb30/Ycf12, peripheral proteins of the oxygen-evolving complex and a large number of cofactors. It forms dimeric complexes.

It localises to the plastid. The protein localises to the chloroplast thylakoid membrane. In terms of biological role, a core subunit of photosystem II (PSII), required for optimal photosynthesis, probably helps stabilize the reaction center. In Chlamydomonas reinhardtii (Chlamydomonas smithii), this protein is Photosystem II reaction center protein Psb30.